The primary structure comprises 696 residues: UvrABC system protein C (696 aa).

Positions 16–95 constitute a GIY-YIG domain; sequence TEPGVYKFRD…IKRFDPRFNV (80 aa). Residues 208–243 enclose the UVR domain; sequence DKVTRKLNADMMAAAEELDFERAARLRDDLEAIDKV.

Belongs to the UvrC family. As to quaternary structure, interacts with UvrB in an incision complex.

The protein resides in the cytoplasm. The UvrABC repair system catalyzes the recognition and processing of DNA lesions. UvrC both incises the 5' and 3' sides of the lesion. The N-terminal half is responsible for the 3' incision and the C-terminal half is responsible for the 5' incision. The sequence is that of UvrABC system protein C from Corynebacterium glutamicum (strain ATCC 13032 / DSM 20300 / JCM 1318 / BCRC 11384 / CCUG 27702 / LMG 3730 / NBRC 12168 / NCIMB 10025 / NRRL B-2784 / 534).